The following is a 741-amino-acid chain: Transcription activator of gluconeogenesis BDBG_05438 (741 aa).

The disordered stretch occupies residues 1–70 (MTASTRNGSP…NAKDPLRPRR (70 aa)). Over residues 25-61 (KSMTTTPANPPETKSQTNGKGSGTAQSSQKPASTSAN) the composition is skewed to polar residues. Positions 77-105 (CFACQRAHLTCGDERPCQRCIKRGLQDAC) form a DNA-binding region, zn(2)-C6 fungal-type. 6 disordered regions span residues 135-163 (QANT…QSVS), 202-239 (SVFH…SVSG), 285-321 (GAGD…NNQS), 401-421 (TNLM…PGLK), 559-590 (GSSL…PHTG), and 655-741 (FHGK…AKRG). A compositionally biased stretch (polar residues) spans 202–226 (SVFHAQSPSSTQNFDLSSNPQTQNL). Residues 227–238 (SSAMSQTASSVS) show a composition bias toward low complexity. Polar residues-rich tracts occupy residues 291–321 (PSDS…NNQS) and 401–416 (TNLM…SRIS). Residues 560–572 (SSLSSASSVRGSS) are compositionally biased toward low complexity. Polar residues predominate over residues 573–586 (TFTPRNNNTHNSID). The span at 672–718 (TGTTTSGDVATTTATGTSTSNGANANTNGNNTNPNDPSTAASSSASS) shows a compositional bias: low complexity. Basic residues predominate over residues 723–732 (RSNHLGKRGG).

The protein belongs to the ERT1/acuK family.

It is found in the nucleus. Functionally, transcription factor which regulates nonfermentable carbon utilization. Activator of gluconeogenetic genes. The polypeptide is Transcription activator of gluconeogenesis BDBG_05438 (Blastomyces gilchristii (strain SLH14081) (Blastomyces dermatitidis)).